Here is a 373-residue protein sequence, read N- to C-terminus: Ribonuclease D (373 aa).

Residues Tyr-3–Glu-171 form the 3'-5' exonuclease domain. The 80-residue stretch at Arg-210–Ala-289 folds into the HRDC domain.

The protein belongs to the RNase D family. It depends on a divalent metal cation as a cofactor.

It localises to the cytoplasm. It catalyses the reaction Exonucleolytic cleavage that removes extra residues from the 3'-terminus of tRNA to produce 5'-mononucleotides.. In terms of biological role, exonuclease involved in the 3' processing of various precursor tRNAs. Initiates hydrolysis at the 3'-terminus of an RNA molecule and releases 5'-mononucleotides. The polypeptide is Ribonuclease D (Serratia proteamaculans (strain 568)).